We begin with the raw amino-acid sequence, 648 residues long: Acyl-CoA-binding domain-containing protein 5 (648 aa).

Positions 13-107 (YPERFYAAAS…LEEADPGWYP (95 aa)) constitute an ACB domain. An acyl-CoA-binding positions include lysine 34, 49 to 53 (YTLHQ), and lysine 75. 6 Kelch repeats span residues 196–244 (KMYM…KLTH), 256–306 (QLLS…LVGK), 307–357 (SLVI…VHAE), 359–408 (YLLI…TIGE), 409–457 (NWYI…LVVS), and 464–509 (IVVA…AVNN). Serine 517 is subject to Phosphoserine. Residues 520 to 632 (KVEGKADRII…AATMNAKRQS (113 aa)) adopt a coiled-coil conformation. Residues 625–634 (TMNAKRQSSG) show a composition bias toward polar residues. Residues 625-648 (TMNAKRQSSGGVWGWLAGTPPPKT) are disordered.

Belongs to the ACBP family. Expressed in roots, stems, leaves, flowers and siliques.

It is found in the cytoplasm. In terms of biological role, binds medium- and long-chain acyl-CoA esters with very high affinity. Can interact in vitro with oleoyl-CoA, barely with palmitoyl-CoA, but not with arachidonyl-CoA. May function as an intracellular carrier of acyl-CoA esters. The protein is Acyl-CoA-binding domain-containing protein 5 (ACBP5) of Arabidopsis thaliana (Mouse-ear cress).